Reading from the N-terminus, the 351-residue chain is Glycerol-3-phosphate dehydrogenase [NAD(P)+] (351 aa).

NADPH is bound by residues serine 18, tryptophan 19, arginine 38, and lysine 122. 3 residues coordinate sn-glycerol 3-phosphate: lysine 122, glycine 153, and serine 155. Alanine 157 contacts NADPH. Residues lysine 208, aspartate 261, serine 271, arginine 272, and asparagine 273 each contribute to the sn-glycerol 3-phosphate site. The active-site Proton acceptor is lysine 208. NADPH is bound at residue arginine 272. Glutamate 297 serves as a coordination point for NADPH.

It belongs to the NAD-dependent glycerol-3-phosphate dehydrogenase family.

Its subcellular location is the cytoplasm. The enzyme catalyses sn-glycerol 3-phosphate + NAD(+) = dihydroxyacetone phosphate + NADH + H(+). The catalysed reaction is sn-glycerol 3-phosphate + NADP(+) = dihydroxyacetone phosphate + NADPH + H(+). It functions in the pathway membrane lipid metabolism; glycerophospholipid metabolism. Catalyzes the reduction of the glycolytic intermediate dihydroxyacetone phosphate (DHAP) to sn-glycerol 3-phosphate (G3P), the key precursor for phospholipid synthesis. This is Glycerol-3-phosphate dehydrogenase [NAD(P)+] from Bordetella pertussis (strain Tohama I / ATCC BAA-589 / NCTC 13251).